A 227-amino-acid polypeptide reads, in one-letter code: Isopentenyl-diphosphate Delta-isomerase 1 (227 aa).

Lysine 36 provides a ligand contact to substrate. Histidine 40 and histidine 51 together coordinate Mg(2+). One can recognise a Nudix hydrolase domain in the interval 49–199 (LLHRAFSVFL…EIKITPWFQI (151 aa)). Arginine 70 and lysine 74 together coordinate substrate. The active-site Proton acceptor is cysteine 86. Residue serine 87 coordinates substrate. Residues glutamate 146 and glutamate 148 each coordinate Mg(2+). Glutamate 148 is an active-site residue. Lysine 176 is subject to N6-acetyllysine.

The protein belongs to the IPP isomerase type 1 family. In terms of assembly, monomer. It depends on Mg(2+) as a cofactor.

It is found in the peroxisome. It catalyses the reaction isopentenyl diphosphate = dimethylallyl diphosphate. It participates in isoprenoid biosynthesis; dimethylallyl diphosphate biosynthesis; dimethylallyl diphosphate from isopentenyl diphosphate: step 1/1. In terms of biological role, catalyzes the 1,3-allylic rearrangement of the homoallylic substrate isopentenyl (IPP) to its highly electrophilic allylic isomer, dimethylallyl diphosphate (DMAPP). The polypeptide is Isopentenyl-diphosphate Delta-isomerase 1 (IDI1) (Bos taurus (Bovine)).